We begin with the raw amino-acid sequence, 323 residues long: Glyoxylate/hydroxypyruvate reductase B (323 aa).

The disordered stretch occupies residues 37–62 (AEHGGAGARRRHDRLQQHGGSSAAGE). Residues R236 and E265 contribute to the active site. Residue H284 is the Proton donor of the active site.

The protein belongs to the D-isomer specific 2-hydroxyacid dehydrogenase family. GhrB subfamily. In terms of assembly, homodimer.

The protein resides in the cytoplasm. The enzyme catalyses glycolate + NADP(+) = glyoxylate + NADPH + H(+). It catalyses the reaction (R)-glycerate + NAD(+) = 3-hydroxypyruvate + NADH + H(+). It carries out the reaction (R)-glycerate + NADP(+) = 3-hydroxypyruvate + NADPH + H(+). Functionally, catalyzes the NADPH-dependent reduction of glyoxylate and hydroxypyruvate into glycolate and glycerate, respectively. The protein is Glyoxylate/hydroxypyruvate reductase B (tkrA) of Enterobacter agglomerans (Erwinia herbicola).